The chain runs to 324 residues: MASYYEILDVPRSASADDIKKAYRRKALQWHPDKNPDNKEFAEKKFKEVAEAYEVLSDKHKREIYDRYGREGLTGTGTGPSRAEAGSGGPGFTFTFRSPEEVFREFFGSGDPFAELFDDLGPFSELQNRGSRHSGPFFTFSSSFPGHSDFSSSSFSFSPGAGAFRSVSTSTTFVQGRRITTRRIMENGQERVEVEEDGQLKSVTINGVPDDLALGLELSRREQQPSVTSRSGGTQVQQTPASCPLDSDLSEDEDLQLAMAYSLSEMEAAGKKPAGGREAQHRRQGRPKAQHQDPGLGGTQEGARGEATKRSPSPEEKASRCLIL.

N-acetylalanine is present on Ala-2. The 70-residue stretch at 2 to 71 (ASYYEILDVP…REIYDRYGRE (70 aa)) folds into the J domain. 2 disordered regions span residues 70-90 (REGL…SGGP) and 218-324 (LSRR…CLIL). UIM domains follow at residues 210-226 (DDLA…QQPS) and 250-269 (SEDE…MEAA). The span at 224 to 241 (QPSVTSRSGGTQVQQTPA) shows a compositional bias: polar residues. Residues 280–289 (QHRRQGRPKA) show a composition bias toward basic residues. The segment covering 303-324 (ARGEATKRSPSPEEKASRCLIL) has biased composition (basic and acidic residues). At Ser-311 the chain carries Phosphoserine. Residue Cys-321 is modified to Cysteine methyl ester. Cys-321 is lipidated: S-geranylgeranyl cysteine. The CAAX motif motif lies at 321-324 (CLIL). A propeptide spans 322 to 324 (LIL) (removed in mature form).

As to quaternary structure, interacts with HSP70 (HSPA1A or HSPA1B). Interacts with HSPA8/Hsc70. Interacts with PSMA3 and most probably with the whole proteasomal complex. Post-translationally, ubiquitinated by STUB1; does not lead to proteasomal degradation. In terms of tissue distribution, more abundantly expressed in neocortex, cerebellum, spinal cord and retina where it is expressed by neuronal cells (at protein level). Detected at much lower level in non-neuronal tissues including kidney, lung, heart, skeletal muscle, spleen and testis (at protein level). Isoform 1 is more abundant in neocortex and cerebellum compared to isoform 2 (at protein level).

The protein localises to the cytoplasm. It localises to the nucleus. It is found in the endoplasmic reticulum membrane. Functions as a co-chaperone, regulating the substrate binding and activating the ATPase activity of chaperones of the HSP70/heat shock protein 70 family. In parallel, also contributes to the ubiquitin-dependent proteasomal degradation of misfolded proteins. Thereby, may regulate the aggregation and promote the functional recovery of misfolded proteins like HTT, MC4R, PRKN, RHO and SOD1 and be crucial for many biological processes. Isoform 1 which is localized to the endoplasmic reticulum membranes may specifically function in ER-associated protein degradation of misfolded proteins. The chain is DnaJ homolog subfamily B member 2 from Homo sapiens (Human).